The sequence spans 406 residues: Phosphopentomutase (406 aa).

D10, D305, H310, D346, H347, and H358 together coordinate Mn(2+).

Belongs to the phosphopentomutase family. Mn(2+) is required as a cofactor.

The protein localises to the cytoplasm. The enzyme catalyses 2-deoxy-alpha-D-ribose 1-phosphate = 2-deoxy-D-ribose 5-phosphate. It carries out the reaction alpha-D-ribose 1-phosphate = D-ribose 5-phosphate. It participates in carbohydrate degradation; 2-deoxy-D-ribose 1-phosphate degradation; D-glyceraldehyde 3-phosphate and acetaldehyde from 2-deoxy-alpha-D-ribose 1-phosphate: step 1/2. Functionally, isomerase that catalyzes the conversion of deoxy-ribose 1-phosphate (dRib-1-P) and ribose 1-phosphate (Rib-1-P) to deoxy-ribose 5-phosphate (dRib-5-P) and ribose 5-phosphate (Rib-5-P), respectively. This is Phosphopentomutase from Vibrio vulnificus (strain CMCP6).